The following is a 396-amino-acid chain: Tryptophan synthase beta chain (396 aa).

Lys86 is subject to N6-(pyridoxal phosphate)lysine.

This sequence belongs to the TrpB family. In terms of assembly, tetramer of two alpha and two beta chains. Pyridoxal 5'-phosphate serves as cofactor.

The catalysed reaction is (1S,2R)-1-C-(indol-3-yl)glycerol 3-phosphate + L-serine = D-glyceraldehyde 3-phosphate + L-tryptophan + H2O. The protein operates within amino-acid biosynthesis; L-tryptophan biosynthesis; L-tryptophan from chorismate: step 5/5. Functionally, the beta subunit is responsible for the synthesis of L-tryptophan from indole and L-serine. This is Tryptophan synthase beta chain from Vibrio cholerae serotype O1 (strain ATCC 39315 / El Tor Inaba N16961).